We begin with the raw amino-acid sequence, 161 residues long: Nucleotide-binding protein Shewmr4_3156 (161 aa).

This sequence belongs to the YajQ family.

In terms of biological role, nucleotide-binding protein. The sequence is that of Nucleotide-binding protein Shewmr4_3156 from Shewanella sp. (strain MR-4).